We begin with the raw amino-acid sequence, 231 residues long: Urease subunit gamma/beta (231 aa).

The segment at 1 to 101 (MLLTPTELER…LVTVHQPIRP (101 aa)) is urease gamma. The segment at 102–231 (GQLPLAVMPT…RARAQFFKGA (130 aa)) is urease beta.

The protein in the N-terminal section; belongs to the urease gamma subunit family. In the C-terminal section; belongs to the urease beta subunit family. Heterohexamer of 3 UreC (alpha) and 3 UreAB (gamma/beta) subunits.

The protein resides in the cytoplasm. The enzyme catalyses urea + 2 H2O + H(+) = hydrogencarbonate + 2 NH4(+). The protein operates within nitrogen metabolism; urea degradation; CO(2) and NH(3) from urea (urease route): step 1/1. This Pseudomonas syringae pv. syringae (strain B728a) protein is Urease subunit gamma/beta.